The chain runs to 357 residues: Protein-glutamate methylesterase/protein-glutamine glutaminase 1 (357 aa).

A Response regulatory domain is found at 10–127 (RTLIVDDSAF…DVNKIEKELV (118 aa)). D61 is subject to 4-aspartylphosphate. The 195-residue stretch at 159 to 353 (SCAGDFAVLI…EEIVRMSEVK (195 aa)) folds into the CheB-type methylesterase domain. Catalysis depends on residues S171, H198, and D295.

This sequence belongs to the CheB family. Phosphorylated by CheA. Phosphorylation of the N-terminal regulatory domain activates the methylesterase activity.

The protein resides in the cytoplasm. It catalyses the reaction [protein]-L-glutamate 5-O-methyl ester + H2O = L-glutamyl-[protein] + methanol + H(+). The catalysed reaction is L-glutaminyl-[protein] + H2O = L-glutamyl-[protein] + NH4(+). In terms of biological role, involved in chemotaxis. Part of a chemotaxis signal transduction system that modulates chemotaxis in response to various stimuli. Catalyzes the demethylation of specific methylglutamate residues introduced into the chemoreceptors (methyl-accepting chemotaxis proteins or MCP) by CheR. Also mediates the irreversible deamidation of specific glutamine residues to glutamic acid. The sequence is that of Protein-glutamate methylesterase/protein-glutamine glutaminase 1 from Methanosarcina mazei (strain ATCC BAA-159 / DSM 3647 / Goe1 / Go1 / JCM 11833 / OCM 88) (Methanosarcina frisia).